Reading from the N-terminus, the 446-residue chain is Exodeoxyribonuclease 7 large subunit (446 aa).

Belongs to the XseA family. Heterooligomer composed of large and small subunits.

The protein resides in the cytoplasm. The catalysed reaction is Exonucleolytic cleavage in either 5'- to 3'- or 3'- to 5'-direction to yield nucleoside 5'-phosphates.. Its function is as follows. Bidirectionally degrades single-stranded DNA into large acid-insoluble oligonucleotides, which are then degraded further into small acid-soluble oligonucleotides. The chain is Exodeoxyribonuclease 7 large subunit from Streptococcus pneumoniae (strain Taiwan19F-14).